We begin with the raw amino-acid sequence, 519 residues long: Protein amnionless (519 aa).

The first 19 residues, 1 to 19 (MGAPGRVLLWLQLCALTRA), serve as a signal peptide directing secretion. Residues 20–430 (AYKLWVPNTY…NAPGARSDLM (411 aa)) are Extracellular-facing. N-linked (GlcNAc...) asparagine glycosylation is found at Asn-35 and Asn-39. Intrachain disulfides connect Cys-43–Cys-152, Cys-193–Cys-267, Cys-259–Cys-265, Cys-277–Cys-303, Cys-288–Cys-304, and Cys-293–Cys-307. Residues 67–143 (SDMEELQDRK…VLASGAGFSA (77 aa)) are interaction with CUBN. A VWFC domain is found at 256–308 (PEACADPSGCVCGNAEVQPWICAALLQPLGGRCPQAACQDALRPEGQCCDLCG). Residues 431–451 (GGLVAALLLLLLVLLVAALLL) form a helical membrane-spanning segment. The Cytoplasmic segment spans residues 452–519 (RRAGRLRWSR…YGEAEAEAEA (68 aa)).

As to quaternary structure, interacts (via extracellular region) with CUBN/cubilin, giving rise to a huge complex containing one AMN chain and three CUBN chains. Post-translationally, N-glycosylated. In terms of processing, a soluble form arises by proteolytic removal of the membrane anchor. As to expression, detected in kidney cortex (at protein level).

The protein resides in the apical cell membrane. The protein localises to the cell membrane. Its subcellular location is the endosome membrane. It is found in the membrane. It localises to the coated pit. Functionally, membrane-bound component of the endocytic receptor formed by AMN and CUBN. Required for normal CUBN glycosylation and trafficking to the cell surface. The complex formed by AMN and CUBN is required for efficient absorption of vitamin B12. Required for normal CUBN-mediated protein transport in the kidney. The polypeptide is Protein amnionless (AMN) (Sus scrofa (Pig)).